We begin with the raw amino-acid sequence, 361 residues long: Protein RecA (361 aa).

Position 77 to 84 (77 to 84) interacts with ATP; the sequence is GPESSGKT.

Belongs to the RecA family.

The protein localises to the cytoplasm. Its function is as follows. Can catalyze the hydrolysis of ATP in the presence of single-stranded DNA, the ATP-dependent uptake of single-stranded DNA by duplex DNA, and the ATP-dependent hybridization of homologous single-stranded DNAs. It interacts with LexA causing its activation and leading to its autocatalytic cleavage. The protein is Protein RecA of Sinorhizobium fredii (strain NBRC 101917 / NGR234).